We begin with the raw amino-acid sequence, 630 residues long: Plastin-3 (630 aa).

EF-hand domains follow at residues D12–P47 and K52–S87. D25, N27, N29, E36, D65, N67, D69, K71, and E76 together coordinate Ca(2+). Actin-binding regions lie at residues T109–K382 and P383–M627. 2 consecutive Calponin-homology (CH) domains span residues E123–L239 and L267–P378. Phosphoserine occurs at positions 268, 293, 326, and 339. Phosphothreonine is present on T391. Calponin-homology (CH) domains lie at T397–T506 and K518–M627.

In terms of assembly, monomer.

It is found in the cytoplasm. Its function is as follows. Actin-bundling protein. This chain is Plastin-3 (Pls3), found in Rattus norvegicus (Rat).